Consider the following 295-residue polypeptide: CRISPR-associated endonuclease Cas1 2 (295 aa).

Positions 155, 215, and 230 each coordinate Mn(2+).

It belongs to the CRISPR-associated endonuclease Cas1 family. Homodimer, forms a heterotetramer with a Cas2 homodimer. Mg(2+) is required as a cofactor. It depends on Mn(2+) as a cofactor.

Its function is as follows. CRISPR (clustered regularly interspaced short palindromic repeat), is an adaptive immune system that provides protection against mobile genetic elements (viruses, transposable elements and conjugative plasmids). CRISPR clusters contain spacers, sequences complementary to antecedent mobile elements, and target invading nucleic acids. CRISPR clusters are transcribed and processed into CRISPR RNA (crRNA). Acts as a dsDNA endonuclease. Involved in the integration of spacer DNA into the CRISPR cassette. The chain is CRISPR-associated endonuclease Cas1 2 from Pyrobaculum aerophilum (strain ATCC 51768 / DSM 7523 / JCM 9630 / CIP 104966 / NBRC 100827 / IM2).